Here is a 669-residue protein sequence, read N- to C-terminus: DNA ligase (669 aa).

NAD(+) is bound by residues 34 to 38 (DAEYD), 83 to 84 (SL), and Glu114. Lys116 acts as the N6-AMP-lysine intermediate in catalysis. Residues Arg137, Glu171, Lys287, and Lys311 each contribute to the NAD(+) site. Residues Cys405, Cys408, Cys423, and Cys428 each coordinate Zn(2+). Positions 591-669 (NVESYFAGKT…EERFLQELNK (79 aa)) constitute a BRCT domain.

This sequence belongs to the NAD-dependent DNA ligase family. LigA subfamily. Requires Mg(2+) as cofactor. It depends on Mn(2+) as a cofactor.

It catalyses the reaction NAD(+) + (deoxyribonucleotide)n-3'-hydroxyl + 5'-phospho-(deoxyribonucleotide)m = (deoxyribonucleotide)n+m + AMP + beta-nicotinamide D-nucleotide.. Its function is as follows. DNA ligase that catalyzes the formation of phosphodiester linkages between 5'-phosphoryl and 3'-hydroxyl groups in double-stranded DNA using NAD as a coenzyme and as the energy source for the reaction. It is essential for DNA replication and repair of damaged DNA. In Bacillus cereus (strain 03BB102), this protein is DNA ligase.